The sequence spans 224 residues: Ribonuclease T (224 aa).

The Exonuclease domain occupies 20–195 (VVIDVETAGF…YDTQKTAELF (176 aa)). Mg(2+) contacts are provided by Asp23, Glu25, His182, and Asp187. The active-site Proton donor/acceptor is the His182.

Belongs to the RNase T family. As to quaternary structure, homodimer. Mg(2+) serves as cofactor.

Trims short 3' overhangs of a variety of RNA species, leaving a one or two nucleotide 3' overhang. Responsible for the end-turnover of tRNA: specifically removes the terminal AMP residue from uncharged tRNA (tRNA-C-C-A). Also appears to be involved in tRNA biosynthesis. This Vibrio cholerae serotype O1 (strain ATCC 39315 / El Tor Inaba N16961) protein is Ribonuclease T.